The following is a 548-amino-acid chain: 2-succinyl-5-enolpyruvyl-6-hydroxy-3-cyclohexene-1-carboxylate synthase (548 aa).

This sequence belongs to the TPP enzyme family. MenD subfamily. As to quaternary structure, homodimer. It depends on Mg(2+) as a cofactor. Requires Mn(2+) as cofactor. Thiamine diphosphate serves as cofactor.

It carries out the reaction isochorismate + 2-oxoglutarate + H(+) = 5-enolpyruvoyl-6-hydroxy-2-succinyl-cyclohex-3-ene-1-carboxylate + CO2. Its pathway is quinol/quinone metabolism; 1,4-dihydroxy-2-naphthoate biosynthesis; 1,4-dihydroxy-2-naphthoate from chorismate: step 2/7. It functions in the pathway quinol/quinone metabolism; menaquinone biosynthesis. In terms of biological role, catalyzes the thiamine diphosphate-dependent decarboxylation of 2-oxoglutarate and the subsequent addition of the resulting succinic semialdehyde-thiamine pyrophosphate anion to isochorismate to yield 2-succinyl-5-enolpyruvyl-6-hydroxy-3-cyclohexene-1-carboxylate (SEPHCHC). The protein is 2-succinyl-5-enolpyruvyl-6-hydroxy-3-cyclohexene-1-carboxylate synthase of Mycolicibacterium vanbaalenii (strain DSM 7251 / JCM 13017 / BCRC 16820 / KCTC 9966 / NRRL B-24157 / PYR-1) (Mycobacterium vanbaalenii).